The following is a 540-amino-acid chain: MGAVWLSHVSQLVCGCYLIEQSSCVLRTFHWSLSHSLNFTLTMKPKRRRLGVKMESFSLATPNMCFRKVSSELDSSFNGENVVCGLELEEKTAGDRNRIHFLEERNEETLSKRLRKLSRLDKVRSALELFDSMRFLGLQPNAHACNSFLSCLLRNGDIQKAFTVFEFMRKKENVTGHTYSLMLKAVAEVKGCESALRMFRELEREPKRRSCFDVVLYNTAISLCGRINNVYETERIWRVMKGDGHIGTEITYSLLVSIFVRCGRSELALDVYDEMVNNKISLREDAMYAMISACTKEEKWDLALKIFQSMLKKGMKPNLVACNTLINSLGKAGKVGLVFKVYSVLKSLGHKPDEYTWNALLTALYKANRYEDVLQLFDMIRSENLCCLNEYLYNTAMVSCQKLGYWEKAVKLLYEMEGSGLTVSTSSYNLVISACEKSRKSKVALLVYEHMAQRDCKPNTFTYLSLVRSCIWGSLWDEVEDILKKVEPDVSLYNAAIHGMCLRREFKFAKELYVKMREMGLEPDGKTRAMMLQNLKKHQK.

PPR repeat units lie at residues 106 to 140, 141 to 175, 177 to 205, 213 to 247, 248 to 282, 283 to 317, 318 to 352, 353 to 387, 389 to 423, 424 to 458, 459 to 487, and 489 to 523; these read NEET…GLQP, NAHA…ENVT, HTYS…LERE, DVVL…GHIG, TEIT…KISL, REDA…GMKP, NLVA…GHKP, DEYT…NLCC, NEYL…GLTV, STSS…DCKP, NTFT…KKVE, and DVSL…GLEP.

This sequence belongs to the PPR family. P subfamily.

The sequence is that of Pentatricopeptide repeat-containing protein At3g29290 (EMB2076) from Arabidopsis thaliana (Mouse-ear cress).